The following is a 145-amino-acid chain: UPF0179 protein MmarC6_0993 (145 aa).

The protein belongs to the UPF0179 family.

This Methanococcus maripaludis (strain C6 / ATCC BAA-1332) protein is UPF0179 protein MmarC6_0993.